The chain runs to 461 residues: Asparagine--tRNA ligase (461 aa).

Belongs to the class-II aminoacyl-tRNA synthetase family. In terms of assembly, homodimer.

The protein resides in the cytoplasm. It catalyses the reaction tRNA(Asn) + L-asparagine + ATP = L-asparaginyl-tRNA(Asn) + AMP + diphosphate + H(+). This is Asparagine--tRNA ligase from Geobacter sulfurreducens (strain ATCC 51573 / DSM 12127 / PCA).